Consider the following 285-residue polypeptide: 2-dehydro-3-deoxyphosphooctonate aldolase (285 aa).

It belongs to the KdsA family.

It is found in the cytoplasm. The enzyme catalyses D-arabinose 5-phosphate + phosphoenolpyruvate + H2O = 3-deoxy-alpha-D-manno-2-octulosonate-8-phosphate + phosphate. The protein operates within carbohydrate biosynthesis; 3-deoxy-D-manno-octulosonate biosynthesis; 3-deoxy-D-manno-octulosonate from D-ribulose 5-phosphate: step 2/3. It participates in bacterial outer membrane biogenesis; lipopolysaccharide biosynthesis. This chain is 2-dehydro-3-deoxyphosphooctonate aldolase, found in Polaromonas sp. (strain JS666 / ATCC BAA-500).